The primary structure comprises 490 residues: UDP-N-acetylmuramate--L-alanine ligase (490 aa).

130–136 serves as a coordination point for ATP; the sequence is GTHGKTT.

Belongs to the MurCDEF family.

It localises to the cytoplasm. It catalyses the reaction UDP-N-acetyl-alpha-D-muramate + L-alanine + ATP = UDP-N-acetyl-alpha-D-muramoyl-L-alanine + ADP + phosphate + H(+). The protein operates within cell wall biogenesis; peptidoglycan biosynthesis. Functionally, cell wall formation. The chain is UDP-N-acetylmuramate--L-alanine ligase from Idiomarina loihiensis (strain ATCC BAA-735 / DSM 15497 / L2-TR).